The sequence spans 149 residues: SsrA-binding protein (149 aa).

Residues 121–149 (GKKQHDKRADELDKDSKREAQRAMKERQR) are disordered. Positions 127 to 149 (KRADELDKDSKREAQRAMKERQR) are enriched in basic and acidic residues.

Belongs to the SmpB family.

Its subcellular location is the cytoplasm. Its function is as follows. Required for rescue of stalled ribosomes mediated by trans-translation. Binds to transfer-messenger RNA (tmRNA), required for stable association of tmRNA with ribosomes. tmRNA and SmpB together mimic tRNA shape, replacing the anticodon stem-loop with SmpB. tmRNA is encoded by the ssrA gene; the 2 termini fold to resemble tRNA(Ala) and it encodes a 'tag peptide', a short internal open reading frame. During trans-translation Ala-aminoacylated tmRNA acts like a tRNA, entering the A-site of stalled ribosomes, displacing the stalled mRNA. The ribosome then switches to translate the ORF on the tmRNA; the nascent peptide is terminated with the 'tag peptide' encoded by the tmRNA and targeted for degradation. The ribosome is freed to recommence translation, which seems to be the essential function of trans-translation. The protein is SsrA-binding protein of Dechloromonas aromatica (strain RCB).